We begin with the raw amino-acid sequence, 259 residues long: Small ribosomal subunit protein uS2 (259 aa).

The disordered stretch occupies residues 224 to 259 (GKQGEDDQQVAPAEDVAEEVSDESLQDLKNSVEGND). The segment covering 238 to 248 (DVAEEVSDESL) has biased composition (acidic residues). Polar residues predominate over residues 250-259 (DLKNSVEGND).

It belongs to the universal ribosomal protein uS2 family.

The chain is Small ribosomal subunit protein uS2 from Limosilactobacillus fermentum (strain NBRC 3956 / LMG 18251) (Lactobacillus fermentum).